The following is a 236-amino-acid chain: Large ribosomal subunit protein uL2 (236 aa).

The interval 198–236 (DHPFGGGGRQHPGRPKTVSRGTPPGRKVGSIAARRTGKR) is disordered.

It belongs to the universal ribosomal protein uL2 family. As to quaternary structure, part of the 50S ribosomal subunit. Forms a bridge to the 30S subunit in the 70S ribosome.

Functionally, one of the primary rRNA binding proteins. Required for association of the 30S and 50S subunits to form the 70S ribosome, for tRNA binding and peptide bond formation. It has been suggested to have peptidyltransferase activity; this is somewhat controversial. Makes several contacts with the 16S rRNA in the 70S ribosome. This is Large ribosomal subunit protein uL2 from Methanothrix thermoacetophila (strain DSM 6194 / JCM 14653 / NBRC 101360 / PT) (Methanosaeta thermophila).